The sequence spans 133 residues: MSIRSKFNKDEKKFVKFIDSTEEIIKHLNKSDSSKRSRLKLSGQQIDVLESNFKIDSHPNSATKSLLSNALSIPLKNIQIWFQNRRAKEKTARDGGRRRSGNAEIEDGEYEHGKMSYQAMCPFDFPPQERYFL.

A DNA-binding region (homeobox) is located at residues 34 to 93; the sequence is SKRSRLKLSGQQIDVLESNFKIDSHPNSATKSLLSNALSIPLKNIQIWFQNRRAKEKTAR. A disordered region spans residues 86–109; it reads RAKEKTARDGGRRRSGNAEIEDGE.

Its subcellular location is the nucleus. The chain is Homeobox protein HD-5 (HD-5) from Encephalitozoon cuniculi (strain GB-M1) (Microsporidian parasite).